We begin with the raw amino-acid sequence, 396 residues long: S-adenosylmethionine synthase (396 aa).

ATP is bound at residue histidine 15. Position 17 (aspartate 17) interacts with Mg(2+). Glutamate 43 is a K(+) binding site. 2 residues coordinate L-methionine: glutamate 56 and glutamine 99. The interval glutamine 99 to arginine 109 is flexible loop. Residues aspartate 175–lysine 177, arginine 241–phenylalanine 242, aspartate 250, arginine 256–lysine 257, alanine 273, and lysine 277 each bind ATP. Aspartate 250 provides a ligand contact to L-methionine. L-methionine is bound at residue lysine 281.

Belongs to the AdoMet synthase family. Homotetramer; dimer of dimers. Requires Mg(2+) as cofactor. It depends on K(+) as a cofactor.

Its subcellular location is the cytoplasm. It carries out the reaction L-methionine + ATP + H2O = S-adenosyl-L-methionine + phosphate + diphosphate. The protein operates within amino-acid biosynthesis; S-adenosyl-L-methionine biosynthesis; S-adenosyl-L-methionine from L-methionine: step 1/1. Its function is as follows. Catalyzes the formation of S-adenosylmethionine (AdoMet) from methionine and ATP. The overall synthetic reaction is composed of two sequential steps, AdoMet formation and the subsequent tripolyphosphate hydrolysis which occurs prior to release of AdoMet from the enzyme. This chain is S-adenosylmethionine synthase, found in Desulfitobacterium hafniense (strain DSM 10664 / DCB-2).